Reading from the N-terminus, the 112-residue chain is Divalent-cation tolerance protein CutA (112 aa).

Cu cation-binding residues include C16, H83, and H84.

Belongs to the CutA family. As to quaternary structure, homotrimer. Requires Cu cation as cofactor.

The protein resides in the cytoplasm. Functionally, involved in resistance toward heavy metals. This Escherichia coli O81 (strain ED1a) protein is Divalent-cation tolerance protein CutA.